The primary structure comprises 120 residues: Large ribosomal subunit protein uL18 (120 aa).

The span at 1 to 10 (MKLNRVESTR) shows a compositional bias: basic and acidic residues. Residues 1 to 26 (MKLNRVESTRSRHRRVRRKVGGTGDR) are disordered. Residues 11–20 (SRHRRVRRKV) show a composition bias toward basic residues.

The protein belongs to the universal ribosomal protein uL18 family. In terms of assembly, part of the 50S ribosomal subunit; part of the 5S rRNA/L5/L18/L25 subcomplex. Contacts the 5S and 23S rRNAs.

Its function is as follows. This is one of the proteins that bind and probably mediate the attachment of the 5S RNA into the large ribosomal subunit, where it forms part of the central protuberance. The chain is Large ribosomal subunit protein uL18 from Cyanothece sp. (strain PCC 7425 / ATCC 29141).